A 239-amino-acid chain; its full sequence is Increased recombination centers protein 22-2 (239 aa).

The N-terminal stretch at 1–19 (MKLSTIFTAFAATIATVAG) is a signal peptide. Over 20–161 (YETTGSKQTV…AAVSFFDPRL (142 aa)) the chain is Lumenal. Residues 162–182 (IFLELVLLITFAGLIYVGYEI) traverse the membrane as a helical segment. Topologically, residues 183 to 239 (WGKQYFKGVAPVKAKKVSAAKASSPVATGPSTTSATGYDTNWIPESHLKQKKTKKVN) are cytoplasmic. The tract at residues 202–222 (AKASSPVATGPSTTSATGYDT) is disordered. Polar residues predominate over residues 211–221 (GPSTTSATGYD).

Belongs to the IRC22 family.

The protein localises to the endoplasmic reticulum membrane. In terms of biological role, is probably involved in a pathway contributing to genomic integrity. In Candida albicans (strain SC5314 / ATCC MYA-2876) (Yeast), this protein is Increased recombination centers protein 22-2 (IRC22-2).